A 1464-amino-acid polypeptide reads, in one-letter code: MGRVGYWTLLVLPALLVWRGPAPSAAAEKGPPALNIAVMLGHSHDVTERELRTLWGPEQAAGLPLDVNVVALLMNRTDPKSLITHVCDLMSGARIHGLVFGDDTDQEAVAQMLDFISSHTFVPILGIHGGASMIMADKDPTSTFFQFGASIQQQATVMLKIMQDYDWHVFSLVTTIFPGYREFISFVKTTVDNSFVGWDMQNVITLDTSFEDAKTQVQLKKIHSSVILLYCSKDEAVLILSEARSLGLTGYDFFWIVPSLVSGNTELIPKEFPSGLISVSYDDWDYSLEARVRDGIGILTTAASSMLEKFSYIPEAKASCYGQMERPEVPMHTLHPFMVNVTWDGKDLSFTEEGYQVHPRLVVIVLNKDREWEKVGKWENHTLSLRHAVWPRYKSFSDCEPDDNHLSIVTLEEAPFVIVEDIDPLTETCVRNTVPCRKFVKINNSTNEGMNVKKCCKGFCIDILKKLSRTVKFTYDLYLVTNGKHGKKVNNVWNGMIGEVVYQRAVMAVGSLTINEERSEVVDFSVPFVETGISVMVSRSNGTVSPSAFLEPFSASVWVMMFVMLLIVSAIAVFVFEYFSPVGYNRNLAKGKAPHGPSFTIGKAIWLLWGLVFNNSVPVQNPKGTTSKIMVSVWAFFAVIFLASYTANLAAFMIQEEFVDQVTGLSDKKFQRPHDYSPPFRFGTVPNGSTERNIRNNYPYMHQYMTKFNQKGVEDALVSLKTGKLDAFIYDAAVLNYKAGRDEGCKLVTIGSGYIFATTGYGIALQKGSPWKRQIDLALLQFVGDGEMEELETLWLTGICHNEKNEVMSSQLDIDNMAGVFYMLAAAMALSLITFIWEHLFYWKLRFCFTGVCSDRPGLLFSISRGIYSCIHGVHIEEKKKSPDFNLTGSQSNMLKLLRSAKNISSMSNMNSSRMDSPKRAADFIQRGSLIMDMVSDKGNLMYSDNRSFQGKESIFGDNMNELQTFVANRQKDNLNNYVFQGQHPLTLNESNPNTVEVAVSTESKANSRPRQLWKKSVDSIRQDSLSQNPVSQRDEATAENRTHSLKSPRYLPEEMAHSDISETSNRATCHREPDNSKNHKTKDNFKRSVASKYPKDCSEVERTYLKTKSSSPRDKIYTIDGEKEPGFHLDPPQFVENVTLPENVDFPDPYQDPSENFRKGDSTLPMNRNPLHNEEGLSNNDQYKLYSKHFTLKDKGSPHSETSERYRQNSTHCRSCLSNMPTYSGHFTMRSPFKCDACLRMGNLYDIDEDQMLQETGNPATGEQVYQQDWAQNNALQLQKNKLRISRQHSYDNIVDKPRELDLSRPSRSISLKDRERLLEGNFYGSLFSVPSSKLSGKKSSLFPQGLEDSKRSKSLLPDHTSDNPFLHSHRDDQRLVIGRCPSDPYKHSLPSQAVNDSYLRSSLRSTASYCSRDSRGHNDVYISEHVMPYAANKNNMYSTPRVLNSCSNRRVYKKMPSIESDV.

The first 22 residues, M1–A22, serve as a signal peptide directing secretion. Over P23–S556 the chain is Extracellular. H44 contributes to the Zn(2+) binding site. N75 carries N-linked (GlcNAc...) asparagine glycosylation. C87 and C320 are joined by a disulfide. The Zn(2+) site is built by H128, E266, and D282. Residues N340, N380, N443, and N444 are each glycosylated (N-linked (GlcNAc...) asparagine). Intrachain disulfides connect C429-C455 and C436-C456. L-glutamate is bound by residues S511, T513, and R518. N541 carries N-linked (GlcNAc...) asparagine glycosylation. Residues V557–F576 form a helical membrane-spanning segment. The Cytoplasmic portion of the chain corresponds to E577–T600. The pore-forming stretch occupies residues F599–Q620. An intramembrane region (discontinuously helical) is located at residues I601–N615. Topologically, residues S616–T625 are cytoplasmic. The helical transmembrane segment at T626–T646 threads the bilayer. Residues A647–I814 are Extracellular-facing. N-linked (GlcNAc...) asparagine glycosylation is present at N687. 3 residues coordinate L-glutamate: S689, T690, and D731. Cysteines 745 and 800 form a disulfide. Residues D815–F835 form a helical membrane-spanning segment. Over I836–V1464 the chain is Cytoplasmic. Phosphoserine occurs at positions 882, 890, and 929. Composition is skewed to polar residues over residues E997 to P1010 and Q1023 to S1032. Residues E997–K1083 form a disordered region. S1025 bears the Phosphoserine mark. Basic and acidic residues-rich tracts occupy residues Q1033–T1043 and L1052–I1061. S1059 and S1062 each carry phosphoserine. The span at C1070–K1083 shows a compositional bias: basic and acidic residues. A phosphoserine mark is found at S1198 and S1291. Residues K1335–R1372 form a disordered region. Residues S1462–V1464 carry the PDZ-binding motif.

The protein belongs to the glutamate-gated ion channel (TC 1.A.10.1) family. NR2A/GRIN2A subfamily. Heterotetramer. Forms heterotetrameric channels composed of two GluN1/zeta subunits (GRIN1), and two identical GluN2/epsilon subunits (GRIN2A, GRIN2B, GRIN2C or GRIN2D) or GluN3 subunits (GRIN3A or GRIN3B) (in vitro). Can also form heterotetrameric channels that contain at least two GluN1 subunits and at least two different GluN2 subunits (or a combination of one GluN2 and one GluN3 subunits) (in vitro). In vivo, the subunit composition may depend on the expression levels of the different subunits. Found in a complex with GRIN1, GRIN3A and PPP2CB. Found in a complex with GRIN1 and GRIN3B. Interacts with AIP1. Interacts with HIP1 and NETO1. Interacts with SNX27 (via PDZ domain); the interaction is required for recycling to the plasma membrane when endocytosed and prevent degradation in lysosomes. Interacts with PDZ domains of PATJ and DLG4. Interacts with LRFN2. Interacts with RPH3A and DLG4; this ternary complex regulates NMDA receptor composition at postsynaptic membranes. Interacts with SORCS2. Interacts with ARC; preventing ARC oligomerization. Interacts (via the extreme C-terminus) with FRMPD2 (the second PDZ domain); the interaction is direct and is likely to promote NMDAR-mediated neural signal transmission. GRIN2A binds FRMPD2 with lower affinity than GRIN2B.

It is found in the cell projection. It localises to the dendritic spine. The protein resides in the cell membrane. Its subcellular location is the synapse. The protein localises to the postsynaptic cell membrane. It is found in the cytoplasmic vesicle membrane. The catalysed reaction is Ca(2+)(in) = Ca(2+)(out). It catalyses the reaction Na(+)(in) = Na(+)(out). The enzyme catalyses K(+)(in) = K(+)(out). NMDA glutamate receptor activity is inhibited by endogenous Mg(2+) in a voltage-dependent manner. NMDA glutamate receptor activity is inhibited by endogenous Zn(2+). NMDA glutamate receptor activity is inhibited by endogenous protons. Functionally, component of N-methyl-D-aspartate (NMDA) receptors (NMDARs) that function as heterotetrameric, ligand-gated cation channels with high calcium permeability and voltage-dependent block by Mg(2+). NMDARs participate in synaptic plasticity for learning and memory formation by contributing to the slow phase of excitatory postsynaptic current, long-term synaptic potentiation, and learning. Channel activation requires binding of the neurotransmitter L-glutamate to the GluN2 subunit, glycine or D-serine binding to the GluN1 subunit, plus membrane depolarization to eliminate channel inhibition by Mg(2+). NMDARs mediate simultaneously the potasium efflux and the influx of calcium and sodium. Each GluN2 subunit confers differential attributes to channel properties, including activation, deactivation and desensitization kinetics, pH sensitivity, Ca2(+) permeability, and binding to allosteric modulators. Participates in the synaptic plasticity regulation through activation by the L-glutamate releaseed by BEST1, into the synaptic cleft, upon F2R/PAR-1 activation in astrocyte. The sequence is that of Glutamate receptor ionotropic, NMDA 2A from Homo sapiens (Human).